Reading from the N-terminus, the 2067-residue chain is Nuclear receptor coactivator 6 (2067 aa).

Residues 1–932 (MVLDDLPNFE…PPRKKKNCHQ (932 aa)) are TBP/GTF2A-binding region. The interval 1-1060 (MVLDDLPNFE…LPVSQNVHPP (1060 aa)) is CREBBP-binding region. The tract at residues 1–1314 (MVLDDLPNFE…QAHKLDSVVV (1314 aa)) is NCOA1-binding region. R95 carries the asymmetric dimethylarginine modification. Disordered regions lie at residues 181–253 (AVMT…RQMN) and 293–548 (TRPL…PGNS). The span at 293-304 (TRPLQQHQQQPQ) shows a compositional bias: low complexity. Polar residues-rich tracts occupy residues 338–347 (SLGTMTTNQG), 357–372 (MQAQ…TVQT), 383–405 (GSQQ…QFTA), 421–457 (PLQQ…QQQM), 465–506 (NPLS…QGPQ), and 526–548 (GQAN…PGNS). The NCOA6IP-binding region stretch occupies residues 777-931 (VNNSPSQVMG…KPPRKKKNCH (155 aa)). Residue S888 is modified to Phosphoserine. Positions 891–895 (LVNLL) match the LXXLL motif 1 motif. Disordered stretches follow at residues 903–1279 (HFGV…QGLN), 1313–1358 (VVNS…APKL), 1424–1481 (NIPQ…EENK), 1497–1581 (QLLD…IPPV), and 1769–1822 (LNPD…GKGK). Low complexity predominate over residues 907-916 (NNKQNNTNAN). Basic residues predominate over residues 917–929 (KPKKKKPPRKKKN). Low complexity predominate over residues 984–996 (QRPLPQMPPQLMQ). The segment covering 999–1024 (APPPQPPQQQPQPQLPQQQQPPPPSQ) has biased composition (pro residues). Residues 1025–1044 (PQSQQQQQQQQMMMMLMMQQ) show a composition bias toward low complexity. Asymmetric dimethylarginine is present on residues R1050 and R1061. Residues 1066 to 1078 (PDSQRMPVQQSGN) are compositionally biased toward polar residues. R1099 bears the Asymmetric dimethylarginine mark. Residues 1103–1123 (SVNTPMGSNSRKMVYQENPQN) show a composition bias toward polar residues. Over residues 1124–1137 (SSSSPLGEMSSLPE) the composition is skewed to low complexity. 3 stretches are compositionally biased toward polar residues: residues 1152-1165 (NMPS…NQLM), 1176-1194 (LSAT…SLPS), and 1205-1217 (APTQ…TPNR). Pro residues predominate over residues 1222-1235 (PYYPQTPNNRPPST). A compositionally biased stretch (polar residues) spans 1313–1324 (VVNSGKQSNPGT). Positions 1326–1349 (KRASPSNSRRSSPGSSRKTTPSPG) are enriched in low complexity. The span at 1424–1435 (NIPQDSDCQNAQ) shows a compositional bias: polar residues. Residues 1495-1499 (LSQLL) carry the LXXLL motif 2 motif. Residues 1545–1562 (EPSTSLSSPHSSEPCSTL) show a composition bias toward low complexity. Residues 1644 to 2067 (SEGQSAAQSN…AVQSKRRKSK (424 aa)) are EP300/CRSP3-binding region. Residues 1775 to 1805 (SPQTNTSADQSTLPPSQPTTVVSSLLTNSPG) show a composition bias toward polar residues. The segment covering 1806-1818 (SSANRRSPVSSSK) has biased composition (low complexity). N6-acetyllysine is present on residues K1822 and K1825. 2 disordered regions span residues 1840 to 1911 (GSLE…LPGG) and 1957 to 2067 (VGSH…RKSK). Polar residues predominate over residues 1871–1883 (EQCSTELDSKTPT). Residues 1892 to 1904 (MTSSPMAPSSTST) are compositionally biased toward low complexity. Positions 2005–2014 (EPKEIVEKSK) are enriched in basic and acidic residues. A Phosphoserine modification is found at S2022.

Monomer and homodimer. Interacts in vitro with the basal transcription factors GTF2A and TBP, suggesting an autonomous transactivation function. Interacts with NCOA1, CRSP3, RBM14, the histone acetyltransferase proteins EP300 and CREBBP, and with methyltransferase proteins NCOA6IP and PRMT2. Interacts with RBM39. Component of the MLL2/3 complex (also named ASCOM complex), at least composed of KMT2D/MLL2 or KMT2C/MLL3, ASH2L, RBBP5, WDR5, NCOA6, DPY30, KDM6A, PAXIP1/PTIP, PAGR1 and alpha- and beta-tubulin. Interacts with ZNF335; may enhance ligand-dependent transcriptional activation by nuclear hormone receptors. Post-translationally, phosphorylated. Widely expressed. High expression in testis and weak expression in small intestine.

The protein localises to the nucleus. Nuclear receptor coactivator that directly binds nuclear receptors and stimulates the transcriptional activities in a hormone-dependent fashion. Coactivates expression in an agonist- and AF2-dependent manner. Involved in the coactivation of different nuclear receptors, such as for steroids (GR and ERs), retinoids (RARs and RXRs), thyroid hormone (TRs), vitamin D3 (VDR) and prostanoids (PPARs). Probably functions as a general coactivator, rather than just a nuclear receptor coactivator. May also be involved in the coactivation of the NF-kappa-B pathway. May coactivate expression via a remodeling of chromatin and its interaction with histone acetyltransferase proteins. Involved in placental, cardiac, hepatic and embryonic development. This is Nuclear receptor coactivator 6 (Ncoa6) from Mus musculus (Mouse).